The following is a 137-amino-acid chain: Large ribosomal subunit protein eL28 (137 aa).

S2 is subject to N-acetylserine. Residues K58 and K65 each participate in a glycyl lysine isopeptide (Lys-Gly) (interchain with G-Cter in SUMO2) cross-link. S115 is subject to Phosphoserine.

Belongs to the eukaryotic ribosomal protein eL28 family. In terms of assembly, component of the large ribosomal subunit.

Its subcellular location is the cytoplasm. Component of the large ribosomal subunit. The ribosome is a large ribonucleoprotein complex responsible for the synthesis of proteins in the cell. The protein is Large ribosomal subunit protein eL28 (Rpl28) of Rattus norvegicus (Rat).